A 333-amino-acid chain; its full sequence is DNA-directed RNA polymerase subunit alpha (333 aa).

The segment at 1 to 233 is alpha N-terminal domain (alpha-NTD); it reads MVREKVRVST…DLFIPFLHAE (233 aa). An alpha C-terminal domain (alpha-CTD) region spans residues 266–333; the sequence is KKEIAFKSIF…DILEIEKHFP (68 aa).

The protein belongs to the RNA polymerase alpha chain family. As to quaternary structure, in plastids the minimal PEP RNA polymerase catalytic core is composed of four subunits: alpha, beta, beta', and beta''. When a (nuclear-encoded) sigma factor is associated with the core the holoenzyme is formed, which can initiate transcription.

The protein localises to the plastid. The protein resides in the chloroplast. The enzyme catalyses RNA(n) + a ribonucleoside 5'-triphosphate = RNA(n+1) + diphosphate. DNA-dependent RNA polymerase catalyzes the transcription of DNA into RNA using the four ribonucleoside triphosphates as substrates. The chain is DNA-directed RNA polymerase subunit alpha from Lotus japonicus (Lotus corniculatus var. japonicus).